The primary structure comprises 208 residues: Large ribosomal subunit protein bL25 (208 aa).

A disordered region spans residues Met1–Arg21.

This sequence belongs to the bacterial ribosomal protein bL25 family. CTC subfamily. Part of the 50S ribosomal subunit; part of the 5S rRNA/L5/L18/L25 subcomplex. Contacts the 5S rRNA. Binds to the 5S rRNA independently of L5 and L18.

Its function is as follows. This is one of the proteins that binds to the 5S RNA in the ribosome where it forms part of the central protuberance. This Hahella chejuensis (strain KCTC 2396) protein is Large ribosomal subunit protein bL25.